We begin with the raw amino-acid sequence, 470 residues long: MSTGRIIQITGPVVDVKFPSGQLPEINNALTVNQQGAADGAVDVKVTLEVALHLGNDTVRTVAMGSTDGLMRGTEVLDTGGPISVPVGEATLGRVFNVLGEEIDLQEPVAEGTRRDPIHREAPSFEELTTTTEILETGIKVVDLLAPYTKGGKIGLFGGAGVGKTVLIQELINNVALEHGGISVFAGVGERTREGNDLYHEMKDAGVITKTAMVFGQMNEPPGARMRVALTGLTMAEYFRDEQGADVLLFIDNIFRFTQAGSEVSALLGRMPSAVGYQPTLATEMGQLQERITSTKKGSVTSIQAIYVPADDYTDPAPATTFAHLDATTNLERKLTEQGIYPAVDPLASTSRALSPEIVGEEHYNVARGVQQTLQKYRELQDIIAILGMEELSEEDKLIVARARRIQFFLSQNFHVAEQFTGQPGSYVPVKETIQGFKDILAGKYDDLPEDAFRLVGRIEEVVEKAKQMA.

158-165 (GGAGVGKT) provides a ligand contact to ATP.

It belongs to the ATPase alpha/beta chains family. In terms of assembly, F-type ATPases have 2 components, CF(1) - the catalytic core - and CF(0) - the membrane proton channel. CF(1) has five subunits: alpha(3), beta(3), gamma(1), delta(1), epsilon(1). CF(0) has three main subunits: a(1), b(2) and c(9-12). The alpha and beta chains form an alternating ring which encloses part of the gamma chain. CF(1) is attached to CF(0) by a central stalk formed by the gamma and epsilon chains, while a peripheral stalk is formed by the delta and b chains.

Its subcellular location is the cell membrane. The catalysed reaction is ATP + H2O + 4 H(+)(in) = ADP + phosphate + 5 H(+)(out). Functionally, produces ATP from ADP in the presence of a proton gradient across the membrane. The catalytic sites are hosted primarily by the beta subunits. The sequence is that of ATP synthase subunit beta from Shouchella clausii (strain KSM-K16) (Alkalihalobacillus clausii).